A 537-amino-acid polypeptide reads, in one-letter code: Probable E3 ubiquitin-protein ligase ARI3 (537 aa).

Residues 1–30 (MDDDYMMLDDDYGEEEDENYSEDDNYSEAE) form a disordered region. The segment at 117-331 (KTMKCDVCME…IAGHSCGRYK (215 aa)) is TRIAD supradomain. Zn(2+) is bound by residues Cys121, Cys124, Cys139, His141, Cys144, Cys147, Cys166, Cys171, Cys210, Cys216, Cys234, Cys236, Cys241, Cys244, His249, Cys254, Cys281, and Cys284. An RING-type 1 zinc finger spans residues 121–171 (CDVCMEDDLPSNVMTRMECGHRFCNDCWIGHFTVKINEGESKRILCMAHEC). The IBR-type zinc-finger motif lies at 190 to 254 (DRYDRFLIES…LSESHSPCSC (65 aa)). The segment at 281–309 (CPKCSKPIQKRDGCNLMTCKCGQHFCWLC) adopts an RING-type 2; atypical zinc-finger fold. The active site involves Cys294. 6 residues coordinate Zn(2+): Cys299, Cys301, Cys306, Cys309, His317, and Cys327.

Belongs to the RBR family. Ariadne subfamily. Zn(2+) is required as a cofactor. As to expression, ubiquitous.

It catalyses the reaction [E2 ubiquitin-conjugating enzyme]-S-ubiquitinyl-L-cysteine + [acceptor protein]-L-lysine = [E2 ubiquitin-conjugating enzyme]-L-cysteine + [acceptor protein]-N(6)-ubiquitinyl-L-lysine.. The protein operates within protein modification; protein ubiquitination. Might act as an E3 ubiquitin-protein ligase, or as part of E3 complex, which accepts ubiquitin from specific E2 ubiquitin-conjugating enzymes and then transfers it to substrates. The protein is Probable E3 ubiquitin-protein ligase ARI3 (ARI3) of Arabidopsis thaliana (Mouse-ear cress).